The following is a 445-amino-acid chain: 3-phosphoshikimate 1-carboxyvinyltransferase (445 aa).

Positions 1-25 are disordered; the sequence is MTDSNQPMPLQARKSGALHGTARVP. Lys-28, Ser-29, and Arg-33 together coordinate 3-phosphoshikimate. Residue Lys-28 coordinates phosphoenolpyruvate. Residues Gly-101 and Arg-129 each contribute to the phosphoenolpyruvate site. 3-phosphoshikimate contacts are provided by Ser-175, Gln-177, Asp-328, and Lys-355. Phosphoenolpyruvate is bound at residue Gln-177. Asp-328 functions as the Proton acceptor in the catalytic mechanism. Positions 359 and 402 each coordinate phosphoenolpyruvate.

Belongs to the EPSP synthase family. Monomer.

The protein localises to the cytoplasm. The enzyme catalyses 3-phosphoshikimate + phosphoenolpyruvate = 5-O-(1-carboxyvinyl)-3-phosphoshikimate + phosphate. It participates in metabolic intermediate biosynthesis; chorismate biosynthesis; chorismate from D-erythrose 4-phosphate and phosphoenolpyruvate: step 6/7. Catalyzes the transfer of the enolpyruvyl moiety of phosphoenolpyruvate (PEP) to the 5-hydroxyl of shikimate-3-phosphate (S3P) to produce enolpyruvyl shikimate-3-phosphate and inorganic phosphate. The chain is 3-phosphoshikimate 1-carboxyvinyltransferase from Rhodopseudomonas palustris (strain ATCC BAA-98 / CGA009).